The primary structure comprises 484 residues: Zinc metalloproteinase homolog-disintegrin albolatin (484 aa).

The first 20 residues, 1–20, serve as a signal peptide directing secretion; that stretch reads MIQVLLVTICLAVFPYQGSS. A propeptide spanning residues 21–191 is cleaved from the precursor; sequence IILESGNVND…KTSQLNLPLL (171 aa). N-linked (GlcNAc...) asparagine glycosylation is found at asparagine 80, asparagine 251, and asparagine 301. A Peptidase M12B domain is found at 194 to 392; sequence RCIELVMVAD…WTSYCLYNEP (199 aa). 10 disulfide bridges follow: cysteine 305–cysteine 387, cysteine 345–cysteine 369, cysteine 347–cysteine 352, cysteine 403–cysteine 422, cysteine 414–cysteine 432, cysteine 416–cysteine 427, cysteine 426–cysteine 449, cysteine 440–cysteine 446, cysteine 445–cysteine 470, and cysteine 458–cysteine 477. Residues 400–484 enclose the Disintegrin domain; that stretch reads PPVCGNYYLE…GDCPWIGYYG (85 aa). The Cell attachment site; atypical (KGD) signature appears at 462-464; sequence KGD.

It belongs to the venom metalloproteinase (M12B) family. P-II subfamily. P-IIb sub-subfamily. Homodimer; disulfide-linked (disintegrin). As to expression, expressed by the venom gland.

The protein resides in the secreted. The function of this complete protein has not been studied, but it may be similar to the function of the disintegrin domain. A recombinant protein of this domain (409-484) inhibits collagen-induced human platelet aggregation, without having effect on ADP-induced aggregation. It may act either by blocking the binding of fibrinogen to the platelet receptor GPIIb/GPIIIa (ITGA2B/ITGB3) or by blocking the binding of collagen to the integrin alpha-2/beta-1 complex (ITGA2/ITGB1). The protein is Zinc metalloproteinase homolog-disintegrin albolatin of Trimeresurus albolabris (White-lipped pit viper).